The following is a 302-amino-acid chain: Protoheme IX farnesyltransferase (302 aa).

Transmembrane regions (helical) follow at residues 27–47 (VLTL…QSIH), 48–68 (PVLG…AGAL), 97–117 (SALH…GLAL), 119–139 (VLAA…YTIW), 148–168 (IVIG…AATG), 176–196 (LLFA…ALFI), 219–239 (IQIM…WAMG), 240–260 (LTGA…LLLA), and 280–300 (LFGF…ADKV).

This sequence belongs to the UbiA prenyltransferase family. Protoheme IX farnesyltransferase subfamily.

The protein localises to the cell inner membrane. It catalyses the reaction heme b + (2E,6E)-farnesyl diphosphate + H2O = Fe(II)-heme o + diphosphate. Its pathway is porphyrin-containing compound metabolism; heme O biosynthesis; heme O from protoheme: step 1/1. Converts heme B (protoheme IX) to heme O by substitution of the vinyl group on carbon 2 of heme B porphyrin ring with a hydroxyethyl farnesyl side group. This Rhizorhabdus wittichii (strain DSM 6014 / CCUG 31198 / JCM 15750 / NBRC 105917 / EY 4224 / RW1) (Sphingomonas wittichii) protein is Protoheme IX farnesyltransferase.